The primary structure comprises 730 residues: Catalase-peroxidase (730 aa).

The tryptophyl-tyrosyl-methioninium (Trp-Tyr) (with M-251) cross-link spans 92–225 (WHSAGTYRSI…LSAVHMGLIY (134 aa)). H93 (proton acceptor) is an active-site residue. A cross-link (tryptophyl-tyrosyl-methioninium (Tyr-Met) (with W-92)) is located at residues 225–251 (YVNPEGPDGIPDPVASARDIRTTFRRM). H266 contacts heme b.

It belongs to the peroxidase family. Peroxidase/catalase subfamily. Homodimer or homotetramer. It depends on heme b as a cofactor. Post-translationally, formation of the three residue Trp-Tyr-Met cross-link is important for the catalase, but not the peroxidase activity of the enzyme.

The protein resides in the cytoplasm. It catalyses the reaction H2O2 + AH2 = A + 2 H2O. The catalysed reaction is 2 H2O2 = O2 + 2 H2O. In terms of biological role, bifunctional enzyme with both catalase and broad-spectrum peroxidase activity. The sequence is that of Catalase-peroxidase from Blumeria hordei (Barley powdery mildew).